The chain runs to 396 residues: Maltose/maltodextrin-binding periplasmic protein (396 aa).

Positions 1–26 (MKIKTGARILALSALTTMMFSASALA) are cleaved as a signal peptide.

Belongs to the bacterial solute-binding protein 1 family. The complex is composed of two ATP-binding proteins (MalK), two transmembrane proteins (MalG and MalF) and a solute-binding protein (MalE).

It is found in the periplasm. Its function is as follows. Part of the ABC transporter complex MalEFGK involved in maltose/maltodextrin import. Binds maltose and higher maltodextrins. The protein is Maltose/maltodextrin-binding periplasmic protein (malE) of Escherichia coli O157:H7.